We begin with the raw amino-acid sequence, 458 residues long: Protochlorophyllide reductase, chloroplastic (458 aa).

The protein belongs to the short-chain dehydrogenases/reductases (SDR) family. POR subfamily.

Its subcellular location is the plastid. It is found in the chloroplast. The enzyme catalyses chlorophyllide a + NADP(+) = protochlorophyllide a + NADPH + H(+). The protein operates within porphyrin-containing compound metabolism; chlorophyll biosynthesis. Phototransformation of protochlorophyllide (Pchlide) to chlorophyllide (Chlide). The sequence is that of Protochlorophyllide reductase, chloroplastic (PORA) from Marchantia paleacea (Liverwort).